The primary structure comprises 553 residues: Putative transport protein YidE (553 aa).

5 helical membrane-spanning segments follow: residues 4–24 (IALT…IGNV), 28–48 (GIGL…HFVS), 65–85 (FGLI…FFAS), 95–115 (LFAV…HKLF), and 158–178 (MSYA…MWML). RCK C-terminal domains are found at residues 191-276 (QQHE…VIGQ) and 279-361 (DTSL…VLGN). A run of 6 helical transmembrane segments spans residues 371-391 (MLPV…PVFV), 393-413 (GFPA…ALIL), 431-448 (NLAL…VVGL), 464-484 (LSWI…VGIL), 493-513 (YLTM…LAFA), and 533-553 (LVMF…WSIG).

This sequence belongs to the AAE transporter (TC 2.A.81) family. YidE subfamily.

Its subcellular location is the cell membrane. The polypeptide is Putative transport protein YidE (Shigella sonnei (strain Ss046)).